We begin with the raw amino-acid sequence, 423 residues long: Serine--tRNA ligase (423 aa).

An L-serine-binding site is contributed by 231–233; the sequence is TAE. 262–264 is a binding site for ATP; sequence RSE. Residue Glu285 coordinates L-serine. An ATP-binding site is contributed by 349-352; the sequence is EISS. L-serine is bound at residue Ser384.

This sequence belongs to the class-II aminoacyl-tRNA synthetase family. Type-1 seryl-tRNA synthetase subfamily. Homodimer. The tRNA molecule binds across the dimer.

The protein resides in the cytoplasm. The enzyme catalyses tRNA(Ser) + L-serine + ATP = L-seryl-tRNA(Ser) + AMP + diphosphate + H(+). The catalysed reaction is tRNA(Sec) + L-serine + ATP = L-seryl-tRNA(Sec) + AMP + diphosphate + H(+). The protein operates within aminoacyl-tRNA biosynthesis; selenocysteinyl-tRNA(Sec) biosynthesis; L-seryl-tRNA(Sec) from L-serine and tRNA(Sec): step 1/1. Catalyzes the attachment of serine to tRNA(Ser). Is also able to aminoacylate tRNA(Sec) with serine, to form the misacylated tRNA L-seryl-tRNA(Sec), which will be further converted into selenocysteinyl-tRNA(Sec). The protein is Serine--tRNA ligase of Lactococcus lactis subsp. cremoris (strain MG1363).